The sequence spans 206 residues: Small ribosomal subunit protein uS4 (206 aa).

In terms of domain architecture, S4 RNA-binding spans Ser96–Ala158.

This sequence belongs to the universal ribosomal protein uS4 family. As to quaternary structure, part of the 30S ribosomal subunit. Contacts protein S5. The interaction surface between S4 and S5 is involved in control of translational fidelity.

One of the primary rRNA binding proteins, it binds directly to 16S rRNA where it nucleates assembly of the body of the 30S subunit. In terms of biological role, with S5 and S12 plays an important role in translational accuracy. The protein is Small ribosomal subunit protein uS4 of Coxiella burnetii (strain CbuK_Q154) (Coxiella burnetii (strain Q154)).